Here is a 287-residue protein sequence, read N- to C-terminus: 4-hydroxybenzoate octaprenyltransferase (287 aa).

The next 8 membrane-spanning stretches (helical) occupy residues 21-39 (PIGT…WLAA), 95-115 (VLAL…TMNP), 116-136 (LTIG…FMKR), 138-158 (IPIP…MAYA), 161-181 (ANAL…WTIA), 213-233 (IIGA…QLSE), 234-251 (LGSS…LFVY), and 264-284 (CFQA…GVVI).

It belongs to the UbiA prenyltransferase family. Mg(2+) is required as a cofactor.

It localises to the cell inner membrane. It catalyses the reaction all-trans-octaprenyl diphosphate + 4-hydroxybenzoate = 4-hydroxy-3-(all-trans-octaprenyl)benzoate + diphosphate. Its pathway is cofactor biosynthesis; ubiquinone biosynthesis. Functionally, catalyzes the prenylation of para-hydroxybenzoate (PHB) with an all-trans polyprenyl group. Mediates the second step in the final reaction sequence of ubiquinone-8 (UQ-8) biosynthesis, which is the condensation of the polyisoprenoid side chain with PHB, generating the first membrane-bound Q intermediate 3-octaprenyl-4-hydroxybenzoate. This Aeromonas hydrophila subsp. hydrophila (strain ATCC 7966 / DSM 30187 / BCRC 13018 / CCUG 14551 / JCM 1027 / KCTC 2358 / NCIMB 9240 / NCTC 8049) protein is 4-hydroxybenzoate octaprenyltransferase.